A 320-amino-acid chain; its full sequence is tRNA-cytidine(32) 2-sulfurtransferase (320 aa).

The PP-loop motif motif lies at serine 54–serine 59. [4Fe-4S] cluster is bound by residues cysteine 129, cysteine 132, and cysteine 220.

This sequence belongs to the TtcA family. Homodimer. Mg(2+) is required as a cofactor. [4Fe-4S] cluster serves as cofactor.

The protein resides in the cytoplasm. The catalysed reaction is cytidine(32) in tRNA + S-sulfanyl-L-cysteinyl-[cysteine desulfurase] + AH2 + ATP = 2-thiocytidine(32) in tRNA + L-cysteinyl-[cysteine desulfurase] + A + AMP + diphosphate + H(+). Its pathway is tRNA modification. In terms of biological role, catalyzes the ATP-dependent 2-thiolation of cytidine in position 32 of tRNA, to form 2-thiocytidine (s(2)C32). The sulfur atoms are provided by the cysteine/cysteine desulfurase (IscS) system. In Bordetella pertussis (strain Tohama I / ATCC BAA-589 / NCTC 13251), this protein is tRNA-cytidine(32) 2-sulfurtransferase.